We begin with the raw amino-acid sequence, 131 residues long: Profilin (131 aa).

The protein belongs to the profilin family. As to quaternary structure, occurs in many kinds of cells as a complex with monomeric actin in a 1:1 ratio.

It localises to the cytoplasm. It is found in the cytoskeleton. Functionally, binds to actin and affects the structure of the cytoskeleton. At high concentrations, profilin prevents the polymerization of actin, whereas it enhances it at low concentrations. By binding to PIP2, it inhibits the formation of IP3 and DG. This chain is Profilin, found in Fragaria ananassa (Strawberry).